The following is a 730-amino-acid chain: Tubulin polyglutamylase ttll-5 (730 aa).

The TTL domain occupies 120 to 478; sequence RLRLTFKMMR…PLLDRKIIDS (359 aa). Residues 278–281, lysine 291, and aspartate 293 contribute to the ATP site; that span reads SRYL. The tract at residues 594–618 is disordered; it reads KKNTKNSSGSSKASSSSASASSSSS. The span at 600–618 shows a compositional bias: low complexity; the sequence is SSGSSKASSSSASASSSSS.

The protein belongs to the tubulin--tyrosine ligase family. As to expression, expressed in body wall muscles. Not expressed in sensory neurons.

The catalysed reaction is L-glutamyl-[protein] + L-glutamate + ATP = gamma-L-glutamyl-L-glutamyl-[protein] + ADP + phosphate + H(+). Polyglutamylase which preferentially modifies alpha-tubulin. Involved in the side-chain initiation step of the polyglutamylation reaction rather than in the elongation step. Together with ttll-4 and ttll-11, required for male mating. Probably by regulating microtubule stability via the glutamylation of tubulin, negatively regulates axon regrowth after injury in PLM neurons. This chain is Tubulin polyglutamylase ttll-5, found in Caenorhabditis elegans.